Here is a 213-residue protein sequence, read N- to C-terminus: Retinitis pigmentosa 9 protein homolog (213 aa).

A disordered region spans residues 1–61 (MSSGAGSRRP…IKEDETKPED (61 aa)). The PIM1-binding stretch occupies residues 1-147 (MSSGAGSRRP…RENKRHEKDV (147 aa)). Basic and acidic residues-rich tracts occupy residues 9 to 21 (RPREPPEHELQRR) and 52 to 61 (IKEDETKPED). The segment at 96-114 (QCWRCKRYGHRTGDKECPF) adopts a CCHC-type zinc-finger fold. Lys-121 is covalently cross-linked (Glycyl lysine isopeptide (Lys-Gly) (interchain with G-Cter in SUMO2)). The interval 154 to 213 (QLLEDSTSDDDGSSSSSSGDREKRKKRKKKEKHKKRKKEKKKKKKRKHKASKSSESSDSE) is disordered. Basic residues predominate over residues 176-204 (KRKKRKKKEKHKKRKKEKKKKKKRKHKAS). 2 positions are modified to phosphoserine; by PIM1; in vitro: Ser-204 and Ser-206.

Binds to PIM1. Binds to ZNHIT4. Highly expressed in the testis, moderately in the kidney, liver and spleen, and weakly in the skeletal muscle and heart.

It localises to the nucleus. Its function is as follows. Is thought to be a target protein for the PIM1 kinase. May play some roles in B-cell proliferation in association with PIM1. In Mus musculus (Mouse), this protein is Retinitis pigmentosa 9 protein homolog (rp9).